Consider the following 550-residue polypeptide: Glucose-6-phosphate isomerase (550 aa).

The active-site Proton donor is the E356. Active-site residues include H387 and K515.

It belongs to the GPI family.

Its subcellular location is the cytoplasm. It catalyses the reaction alpha-D-glucose 6-phosphate = beta-D-fructose 6-phosphate. The protein operates within carbohydrate biosynthesis; gluconeogenesis. Its pathway is carbohydrate degradation; glycolysis; D-glyceraldehyde 3-phosphate and glycerone phosphate from D-glucose: step 2/4. In terms of biological role, catalyzes the reversible isomerization of glucose-6-phosphate to fructose-6-phosphate. The sequence is that of Glucose-6-phosphate isomerase from Aliivibrio fischeri (strain MJ11) (Vibrio fischeri).